Reading from the N-terminus, the 652-residue chain is Phosphomethylpyrimidine synthase (652 aa).

2 disordered regions span residues 1–45 and 118–166; these read MVSR…SVSA and QRGD…LDGR. Low complexity predominate over residues 8-45; the sequence is SSSSTSKAVTSSPSTSSLSSAASSPSVSSSSSSSSVSA. Positions 134-162 are enriched in gly residues; sequence GASGPGTLGSGTPGSGTPGSGPLGLGGTD. Residues Asn245, Met274, Tyr303, His339, 359-361, 400-403, and Glu439 contribute to the substrate site; these read SRG and DGLR. Position 443 (His443) interacts with Zn(2+). Tyr466 is a binding site for substrate. His507 contributes to the Zn(2+) binding site. [4Fe-4S] cluster is bound by residues Cys587, Cys590, and Cys595.

The protein belongs to the ThiC family. [4Fe-4S] cluster is required as a cofactor.

It catalyses the reaction 5-amino-1-(5-phospho-beta-D-ribosyl)imidazole + S-adenosyl-L-methionine = 4-amino-2-methyl-5-(phosphooxymethyl)pyrimidine + CO + 5'-deoxyadenosine + formate + L-methionine + 3 H(+). The protein operates within cofactor biosynthesis; thiamine diphosphate biosynthesis. Functionally, catalyzes the synthesis of the hydroxymethylpyrimidine phosphate (HMP-P) moiety of thiamine from aminoimidazole ribotide (AIR) in a radical S-adenosyl-L-methionine (SAM)-dependent reaction. This chain is Phosphomethylpyrimidine synthase, found in Frankia casuarinae (strain DSM 45818 / CECT 9043 / HFP020203 / CcI3).